A 546-amino-acid chain; its full sequence is Cysteine desulfurase SufS (546 aa).

The N-terminal stretch at 1–22 (MLRGPRCLYIYLFFVFLPFSFC) is a signal peptide. Lys291 bears the N6-(pyridoxal phosphate)lysine mark. Cys497 (cysteine persulfide intermediate) is an active-site residue.

Belongs to the class-V pyridoxal-phosphate-dependent aminotransferase family. Csd subfamily. Monomer. Interacts with SufE; interaction enhances cysteine desulfurase activity of SufS. Pyridoxal 5'-phosphate is required as a cofactor. Post-translationally, proteolytically cleaved.

It localises to the plastid. The protein resides in the apicoplast. It carries out the reaction (sulfur carrier)-H + L-cysteine = (sulfur carrier)-SH + L-alanine. It participates in cofactor biosynthesis; iron-sulfur cluster biosynthesis. Functionally, catalyzes sulfur activation and mobilization in sulfur mobilization (SUF) pathway for iron-sulfur (Fe-S) cluster biogenesis. Active when in complex with a partner protein SufE. Required for apicoplast maintenance. Plays a role in the development of sporozoites in oocysts in mosquitoes. May provide sulfur for MNMA-mediated tRNA modifications. This Plasmodium falciparum (isolate 3D7) protein is Cysteine desulfurase SufS.